We begin with the raw amino-acid sequence, 106 residues long: Nucleoid-associated protein DP1429 (106 aa).

It belongs to the YbaB/EbfC family. In terms of assembly, homodimer.

It localises to the cytoplasm. Its subcellular location is the nucleoid. Functionally, binds to DNA and alters its conformation. May be involved in regulation of gene expression, nucleoid organization and DNA protection. This is Nucleoid-associated protein DP1429 from Desulfotalea psychrophila (strain LSv54 / DSM 12343).